Reading from the N-terminus, the 580-residue chain is TRAF-type zinc finger domain-containing protein 1 (580 aa).

Alanine 2 is subject to N-acetylalanine. A TRAF-type zinc finger spans residues 27-103 (IHEIHCQRNI…DLELSVLKLK (77 aa)). At serine 190 the chain carries Phosphoserine. Positions 197 to 209 (TTNQRSMTAQFPI) are enriched in polar residues. Residues 197–236 (TTNQRSMTAQFPIQNNLLEEQERQERNRSRQTPKERGEDS) form a disordered region. Basic and acidic residues predominate over residues 216–235 (EQERQERNRSRQTPKERGED). Residues serine 326, serine 414, and serine 429 each carry the phosphoserine modification. Positions 392–580 (PATANNHVSE…GAGDAEEEEE (189 aa)) are disordered. The span at 409 to 419 (QPRETSPELPK) shows a compositional bias: basic and acidic residues. Over residues 453–463 (PPNNTTAPPNR) the composition is skewed to low complexity. Serine 469 bears the Phosphoserine mark.

In terms of assembly, interacts with MAVS, TICAM1, TRAF1, TRAF2, TRAF3 and TRAF6.

In terms of biological role, negative feedback regulator that controls excessive innate immune responses. Regulates both Toll-like receptor 4 (TLR4) and DDX58/RIG1-like helicases (RLH) pathways. May inhibit the LTR pathway by direct interaction with TRAF6 and attenuation of NF-kappa-B activation. May negatively regulate the RLH pathway downstream from MAVS and upstream of NF-kappa-B and IRF3. The polypeptide is TRAF-type zinc finger domain-containing protein 1 (TRAFD1) (Bos taurus (Bovine)).